The chain runs to 265 residues: Oxidoreductase nsrR (265 aa).

Belongs to the avfA family.

It functions in the pathway secondary metabolite biosynthesis. Its function is as follows. Oxidoreductase; part of the gene cluster that mediates the biosynthesis of the tetrahydroxanthone dimer neosartorin, which exhibits antibacterial activity. The two different monomeric units appear to be synthesized by the same set of enzymes, among which the Baeyer-Villiger monooxygenase nsrF is the key enzyme for the divergence of the biosynthetic routes. The pathway begins with the synthesis of atrochrysone thioester by the polyketide synthase nsrB. The atrochrysone carboxyl ACP thioesterase nsrC then breaks the thioester bond and releases the atrochrysone carboxylic acid from AacuL. Atrochrysone carboxylic acid is decarboxylated by the decarboxylase nsrE, and oxidized by the anthrone oxygenase nsrD to yield emodin. Emodin is then reduced to emodin hydroquinone by the oxidoreductase nsrR. A-ring reduction by the short chain dehydrogenase nsrJ, dehydration by the scytalone dehydratase-like protein nsrI and probable spontaneous re-oxidation, results in overall deoxygenation to chrysophanol. The Baeyer-Villiger monooxygenase nsrF accepts chrysophanol as a substrate to insert one oxygen atom at two different positions to yield the precursors of both monomric units. NsrF is promiscuous/flexible in interacting with the 2 (non methylated and methylated) aromatic rings of chrysophanol, thus diverging the biosynthetic pathway at this point. After the hydrolysis of the lactones, methylesterification by the methyltransferase nsrG yields respectively moniliphenone and 2,2',6'-trihydroxy-4-methyl-6-methoxya-cyldiphenylmethanone. The next steps are the hydroxylation by the FAD-dependent monooxygenase nsrK, followed by isomerization by the monooxygenase nsrQ. The short chain dehydrogenase/reductase nsrO then catalyzes the C-5 ketoreduction to give the xanthone skeleton of blennolide C and 5-acetylblennolide A. The acetyltransferase nsrL has a strict substrate specificity and uses only blennolide A but not blennolide C to yield 5-acetylblennolide A as the single-acetylated product. In the final step of the biosynthesis, the heterodimerization of the 2 xanthones, blennolide C and 5-acetylblennolide A, is catalyzed by the cytochrome P450 monooxygenase nsrP. NsrP can utilize at least three different xanthones as its substrates to perform the dimerization reaction. The sequence is that of Oxidoreductase nsrR from Aspergillus novofumigatus (strain IBT 16806).